A 331-amino-acid chain; its full sequence is Protein RecA (331 aa).

66-73 (GPESSGKT) serves as a coordination point for ATP.

It belongs to the RecA family.

The protein resides in the cytoplasm. Its function is as follows. Can catalyze the hydrolysis of ATP in the presence of single-stranded DNA, the ATP-dependent uptake of single-stranded DNA by duplex DNA, and the ATP-dependent hybridization of homologous single-stranded DNAs. It interacts with LexA causing its activation and leading to its autocatalytic cleavage. The polypeptide is Protein RecA (Acholeplasma laidlawii).